Here is a 250-residue protein sequence, read N- to C-terminus: Glutamate racemase (250 aa).

Substrate is bound by residues 7–8 (DS) and 39–40 (YG). Cysteine 70 (proton donor/acceptor) is an active-site residue. 71–72 (NT) is a binding site for substrate. Cysteine 180 acts as the Proton donor/acceptor in catalysis. 181–182 (TH) provides a ligand contact to substrate.

The protein belongs to the aspartate/glutamate racemases family.

The catalysed reaction is L-glutamate = D-glutamate. It functions in the pathway cell wall biogenesis; peptidoglycan biosynthesis. Its function is as follows. Provides the (R)-glutamate required for cell wall biosynthesis. The polypeptide is Glutamate racemase (Campylobacter jejuni subsp. jejuni serotype O:2 (strain ATCC 700819 / NCTC 11168)).